A 335-amino-acid polypeptide reads, in one-letter code: Proline racemase (335 aa).

Catalysis depends on cysteine 91, which acts as the Proton acceptor. The active-site Proton donor is the cysteine 256.

It belongs to the proline racemase family.

The enzyme catalyses L-proline = D-proline. Its activity is regulated as follows. Inhibited by pyrrole-2-carboxylate in vitro. Catalyzes the reversible interconversion of L- and D-proline. Likely functions as the proline racemase necessary for D-proline generation in order to discriminate it from the L-proline used for protein synthesis. This Acetoanaerobium sticklandii (strain ATCC 12662 / DSM 519 / JCM 1433 / CCUG 9281 / NCIMB 10654 / HF) (Clostridium sticklandii) protein is Proline racemase.